The chain runs to 363 residues: NAD(P)H-quinone oxidoreductase subunit 1, chloroplastic (363 aa).

Helical transmembrane passes span 30 to 50 (LVPI…IVWL), 98 to 118 (FSIG…VIPF), 129 to 149 (IGIF…LMSG), 248 to 268 (YSGI…LLSS), 300 to 320 (IIGT…FLFI), and 343 to 363 (FLLP…LLSL).

The protein belongs to the complex I subunit 1 family. In terms of assembly, NDH is composed of at least 16 different subunits, 5 of which are encoded in the nucleus.

The protein resides in the plastid. It localises to the chloroplast thylakoid membrane. It catalyses the reaction a plastoquinone + NADH + (n+1) H(+)(in) = a plastoquinol + NAD(+) + n H(+)(out). The enzyme catalyses a plastoquinone + NADPH + (n+1) H(+)(in) = a plastoquinol + NADP(+) + n H(+)(out). NDH shuttles electrons from NAD(P)H:plastoquinone, via FMN and iron-sulfur (Fe-S) centers, to quinones in the photosynthetic chain and possibly in a chloroplast respiratory chain. The immediate electron acceptor for the enzyme in this species is believed to be plastoquinone. Couples the redox reaction to proton translocation, and thus conserves the redox energy in a proton gradient. This Gossypium barbadense (Sea Island cotton) protein is NAD(P)H-quinone oxidoreductase subunit 1, chloroplastic.